Consider the following 229-residue polypeptide: Ribosome maturation factor RimM (229 aa).

A disordered region spans residues 1–21; that stretch reads MAGHDSGNAKRGRSPSFGVFV. Residues 148-229 form the PRC barrel domain; sequence ADEFYWVDLI…RVVVDWEADY (82 aa).

The protein belongs to the RimM family. Binds ribosomal protein uS19.

Its subcellular location is the cytoplasm. An accessory protein needed during the final step in the assembly of 30S ribosomal subunit, possibly for assembly of the head region. Essential for efficient processing of 16S rRNA. May be needed both before and after RbfA during the maturation of 16S rRNA. It has affinity for free ribosomal 30S subunits but not for 70S ribosomes. The polypeptide is Ribosome maturation factor RimM (Burkholderia mallei (strain NCTC 10247)).